We begin with the raw amino-acid sequence, 95 residues long: Large ribosomal subunit protein uL23 (95 aa).

Belongs to the universal ribosomal protein uL23 family. Part of the 50S ribosomal subunit. Contacts protein L29, and trigger factor when it is bound to the ribosome.

Functionally, one of the early assembly proteins it binds 23S rRNA. One of the proteins that surrounds the polypeptide exit tunnel on the outside of the ribosome. Forms the main docking site for trigger factor binding to the ribosome. The sequence is that of Large ribosomal subunit protein uL23 from Coxiella burnetii (strain RSA 493 / Nine Mile phase I).